Consider the following 189-residue polypeptide: Lumazine protein (189 aa).

2 Lumazine-binding repeats span residues 1–96 (MFKG…LGKG) and 97–189 (ALTG…SNEW).

6,7-dimethyl-8-(1-D-ribityl)lumazine is required as a cofactor.

Its function is as follows. Antenna protein that modulates the color of the bioluminescence emission of the luciferase. In the presence of LumP, luciferase emission is shifted to higher energy values (shorter wavelength). This Photobacterium phosphoreum protein is Lumazine protein (luxL).